The primary structure comprises 491 residues: Aspartyl/glutamyl-tRNA(Asn/Gln) amidotransferase subunit B (491 aa).

Belongs to the GatB/GatE family. GatB subfamily. As to quaternary structure, heterotrimer of A, B and C subunits.

It carries out the reaction L-glutamyl-tRNA(Gln) + L-glutamine + ATP + H2O = L-glutaminyl-tRNA(Gln) + L-glutamate + ADP + phosphate + H(+). The catalysed reaction is L-aspartyl-tRNA(Asn) + L-glutamine + ATP + H2O = L-asparaginyl-tRNA(Asn) + L-glutamate + ADP + phosphate + 2 H(+). Allows the formation of correctly charged Asn-tRNA(Asn) or Gln-tRNA(Gln) through the transamidation of misacylated Asp-tRNA(Asn) or Glu-tRNA(Gln) in organisms which lack either or both of asparaginyl-tRNA or glutaminyl-tRNA synthetases. The reaction takes place in the presence of glutamine and ATP through an activated phospho-Asp-tRNA(Asn) or phospho-Glu-tRNA(Gln). The sequence is that of Aspartyl/glutamyl-tRNA(Asn/Gln) amidotransferase subunit B from Paraburkholderia phymatum (strain DSM 17167 / CIP 108236 / LMG 21445 / STM815) (Burkholderia phymatum).